The following is a 238-amino-acid chain: tRNA (guanine-N(1)-)-methyltransferase (238 aa).

S-adenosyl-L-methionine contacts are provided by residues Gly-112 and 131-136 (LGDFIL).

This sequence belongs to the RNA methyltransferase TrmD family. As to quaternary structure, homodimer.

It localises to the cytoplasm. The enzyme catalyses guanosine(37) in tRNA + S-adenosyl-L-methionine = N(1)-methylguanosine(37) in tRNA + S-adenosyl-L-homocysteine + H(+). In terms of biological role, specifically methylates guanosine-37 in various tRNAs. The sequence is that of tRNA (guanine-N(1)-)-methyltransferase from Nostoc punctiforme (strain ATCC 29133 / PCC 73102).